The primary structure comprises 188 residues: UPF0301 protein Mmwyl1_0539 (188 aa).

This sequence belongs to the UPF0301 (AlgH) family.

This Marinomonas sp. (strain MWYL1) protein is UPF0301 protein Mmwyl1_0539.